The primary structure comprises 75 residues: uncharacterized protein (75 aa).

This is an uncharacterized protein from Equus caballus (Horse).